Reading from the N-terminus, the 180-residue chain is Adenine phosphoribosyltransferase (180 aa).

At A2 the chain carries N-acetylalanine. Residues S15 and S30 each carry the phosphoserine modification. Residue Y60 is modified to Phosphotyrosine. The residue at position 66 (S66) is a Phosphoserine. T135 carries the post-translational modification Phosphothreonine.

It belongs to the purine/pyrimidine phosphoribosyltransferase family. Homodimer.

Its subcellular location is the cytoplasm. The enzyme catalyses AMP + diphosphate = 5-phospho-alpha-D-ribose 1-diphosphate + adenine. It participates in purine metabolism; AMP biosynthesis via salvage pathway; AMP from adenine: step 1/1. In terms of biological role, catalyzes a salvage reaction resulting in the formation of AMP, that is energically less costly than de novo synthesis. This is Adenine phosphoribosyltransferase from Bos taurus (Bovine).